The chain runs to 185 residues: Ribosome-recycling factor (185 aa).

It belongs to the RRF family.

Its subcellular location is the cytoplasm. Responsible for the release of ribosomes from messenger RNA at the termination of protein biosynthesis. May increase the efficiency of translation by recycling ribosomes from one round of translation to another. This chain is Ribosome-recycling factor, found in Actinobacillus succinogenes (strain ATCC 55618 / DSM 22257 / CCUG 43843 / 130Z).